The chain runs to 159 residues: 2-C-methyl-D-erythritol 2,4-cyclodiphosphate synthase (159 aa).

A divalent metal cation-binding residues include aspartate 8 and histidine 10. 4-CDP-2-C-methyl-D-erythritol 2-phosphate is bound by residues 8-10 (DVH) and 34-35 (HS). Residue histidine 42 participates in a divalent metal cation binding. 4-CDP-2-C-methyl-D-erythritol 2-phosphate contacts are provided by residues 56–58 (DIG), 61–65 (FPDTD), 100–106 (AQAPKML), 132–135 (TTTE), phenylalanine 139, and arginine 142.

This sequence belongs to the IspF family. In terms of assembly, homotrimer. It depends on a divalent metal cation as a cofactor.

It carries out the reaction 4-CDP-2-C-methyl-D-erythritol 2-phosphate = 2-C-methyl-D-erythritol 2,4-cyclic diphosphate + CMP. It participates in isoprenoid biosynthesis; isopentenyl diphosphate biosynthesis via DXP pathway; isopentenyl diphosphate from 1-deoxy-D-xylulose 5-phosphate: step 4/6. Involved in the biosynthesis of isopentenyl diphosphate (IPP) and dimethylallyl diphosphate (DMAPP), two major building blocks of isoprenoid compounds. Catalyzes the conversion of 4-diphosphocytidyl-2-C-methyl-D-erythritol 2-phosphate (CDP-ME2P) to 2-C-methyl-D-erythritol 2,4-cyclodiphosphate (ME-CPP) with a corresponding release of cytidine 5-monophosphate (CMP). The chain is 2-C-methyl-D-erythritol 2,4-cyclodiphosphate synthase from Salmonella choleraesuis (strain SC-B67).